Here is a 289-residue protein sequence, read N- to C-terminus: Enoyl-CoA hydratase domain-containing protein 3, mitochondrial (289 aa).

The transit peptide at 1-14 (MLLRGFSELLKCRG) directs the protein to the mitochondrion.

The protein belongs to the enoyl-CoA hydratase/isomerase family.

Its subcellular location is the mitochondrion. May play a role in fatty acid biosynthesis and insulin sensitivity. This Danio rerio (Zebrafish) protein is Enoyl-CoA hydratase domain-containing protein 3, mitochondrial (echdc3).